Consider the following 216-residue polypeptide: Glycerol-3-phosphate acyltransferase (216 aa).

5 consecutive transmembrane segments (helical) span residues 11–31 (LVLG…FGLV), 62–82 (LALA…LVAS), 95–115 (VLAG…PIWL), 132–152 (ATAW…AALF), and 171–191 (LVLA…LAWI).

Belongs to the PlsY family. As to quaternary structure, probably interacts with PlsX.

Its subcellular location is the cell inner membrane. It carries out the reaction an acyl phosphate + sn-glycerol 3-phosphate = a 1-acyl-sn-glycero-3-phosphate + phosphate. It functions in the pathway lipid metabolism; phospholipid metabolism. Catalyzes the transfer of an acyl group from acyl-phosphate (acyl-PO(4)) to glycerol-3-phosphate (G3P) to form lysophosphatidic acid (LPA). This enzyme utilizes acyl-phosphate as fatty acyl donor, but not acyl-CoA or acyl-ACP. The protein is Glycerol-3-phosphate acyltransferase of Rhodospirillum rubrum (strain ATCC 11170 / ATH 1.1.1 / DSM 467 / LMG 4362 / NCIMB 8255 / S1).